The primary structure comprises 157 residues: Crossover junction endodeoxyribonuclease RuvC (157 aa).

Catalysis depends on residues aspartate 7, glutamate 67, and aspartate 140. Mg(2+) contacts are provided by aspartate 7, glutamate 67, and aspartate 140.

It belongs to the RuvC family. In terms of assembly, homodimer which binds Holliday junction (HJ) DNA. The HJ becomes 2-fold symmetrical on binding to RuvC with unstacked arms; it has a different conformation from HJ DNA in complex with RuvA. In the full resolvosome a probable DNA-RuvA(4)-RuvB(12)-RuvC(2) complex forms which resolves the HJ. Mg(2+) is required as a cofactor.

It is found in the cytoplasm. It carries out the reaction Endonucleolytic cleavage at a junction such as a reciprocal single-stranded crossover between two homologous DNA duplexes (Holliday junction).. Its function is as follows. The RuvA-RuvB-RuvC complex processes Holliday junction (HJ) DNA during genetic recombination and DNA repair. Endonuclease that resolves HJ intermediates. Cleaves cruciform DNA by making single-stranded nicks across the HJ at symmetrical positions within the homologous arms, yielding a 5'-phosphate and a 3'-hydroxyl group; requires a central core of homology in the junction. The consensus cleavage sequence is 5'-(A/T)TT(C/G)-3'. Cleavage occurs on the 3'-side of the TT dinucleotide at the point of strand exchange. HJ branch migration catalyzed by RuvA-RuvB allows RuvC to scan DNA until it finds its consensus sequence, where it cleaves and resolves the cruciform DNA. This is Crossover junction endodeoxyribonuclease RuvC from Rickettsia massiliae (strain Mtu5).